The chain runs to 393 residues: MTVPDIRKDFMIVNMGPHHPSMHGVLRLIVTLDGEDVIDCEPVLGYLHRGMEKIAENRTIIQYLPYVTRWDYLATMFTEAITVNAPEQLGNIQVPKRASYIRVIMLELSRIASHLLWLGPFMADIGAQTPFFYIFRERELLYDLFEAATGMRMMHNYFRIGGVAADLPHGWIDKCLDFCDYSLTGVVEYQKLITRNPIFLERVEGVGIIGGEEAINWGLSGPMLRASGIQWDLRKIDHYECYDEFDWEVQWQKEGDSLARYLVRISEMAESIKIIQQVLEGIPGGPYENLEVRRFDKARDSEWNDFEYRFISKKPSPTFELSKQELYVRVEAPKGELGIFLIGDNSVFPWRWKIRPPGFINLQILPQLVKRMKLADIMTILGSIDIIMGEVDR.

Belongs to the complex I 49 kDa subunit family. NDH is composed of at least 16 different subunits, 5 of which are encoded in the nucleus.

Its subcellular location is the plastid. It is found in the chloroplast thylakoid membrane. The catalysed reaction is a plastoquinone + NADH + (n+1) H(+)(in) = a plastoquinol + NAD(+) + n H(+)(out). It carries out the reaction a plastoquinone + NADPH + (n+1) H(+)(in) = a plastoquinol + NADP(+) + n H(+)(out). NDH shuttles electrons from NAD(P)H:plastoquinone, via FMN and iron-sulfur (Fe-S) centers, to quinones in the photosynthetic chain and possibly in a chloroplast respiratory chain. The immediate electron acceptor for the enzyme in this species is believed to be plastoquinone. Couples the redox reaction to proton translocation, and thus conserves the redox energy in a proton gradient. This chain is NAD(P)H-quinone oxidoreductase subunit H, chloroplastic, found in Liriodendron tulipifera (Tuliptree).